The primary structure comprises 219 residues: Antigen 5 like allergen Cul n 1 (219 aa).

A signal peptide spans 1-19; it reads MIKKLSIVILFSCISFVLS. 3 cysteine pairs are disulfide-bonded: Cys23/Cys45, Cys28/Cys124, and Cys55/Cys117. Residues 73 to 211 form the SCP domain; sequence LKVHNRLRNK…RHSGNKYFFW (139 aa).

Belongs to the CRISP family. As to expression, expressed in salivary glands.

It localises to the secreted. This Culicoides nubeculosus (Biting midge) protein is Antigen 5 like allergen Cul n 1.